The sequence spans 123 residues: Small ribosomal subunit protein uS12 (123 aa).

The residue at position 89 (Asp-89) is a 3-methylthioaspartic acid.

It belongs to the universal ribosomal protein uS12 family. As to quaternary structure, part of the 30S ribosomal subunit. Contacts proteins S8 and S17. May interact with IF1 in the 30S initiation complex.

In terms of biological role, with S4 and S5 plays an important role in translational accuracy. Its function is as follows. Interacts with and stabilizes bases of the 16S rRNA that are involved in tRNA selection in the A site and with the mRNA backbone. Located at the interface of the 30S and 50S subunits, it traverses the body of the 30S subunit contacting proteins on the other side and probably holding the rRNA structure together. The combined cluster of proteins S8, S12 and S17 appears to hold together the shoulder and platform of the 30S subunit. This chain is Small ribosomal subunit protein uS12, found in Rhodospirillum centenum (strain ATCC 51521 / SW).